The following is a 524-amino-acid chain: Serine/threonine-protein phosphatase 2A 56 kDa regulatory subunit gamma isoform (524 aa).

At M1 the chain carries N-acetylmethionine. Positions 472 to 489 (RKTVSDEARQAQKDPKKE) match the Nuclear localization signal motif. The disordered stretch occupies residues 476–524 (SDEARQAQKDPKKERPLARRKSELPQDPHTKKALEAHCRADELVPQDGR).

It belongs to the phosphatase 2A regulatory subunit B56 family. In terms of assembly, PP2A consists of a common heterodimeric core enzyme, composed of PPP2CA a 36 kDa catalytic subunit (subunit C) and PPP2R1A a 65 kDa constant regulatory subunit (PR65 or subunit A), that associates with a variety of regulatory subunits. Proteins that associate with the core dimer include three families of regulatory subunits B (the R2/B/PR55/B55, R3/B''/PR72/PR130/PR59 and R5/B'/B56 families), the 48 kDa variable regulatory subunit, viral proteins, and cell signaling molecules. Interacts with SGO1. Interacts with SGO1; the interaction is direct. May interact with TP53. Interacts with IER3 and/or ERK kinases; regulates ERK dephosphorylation Interacts with CIP2A; this interaction stabilizes CIP2A. Highly expressed in testis, heart and spleen. Also found in brain and skeletal muscle.

Its subcellular location is the nucleus. It is found in the chromosome. The protein resides in the centromere. Functionally, the B regulatory subunit might modulate substrate selectivity and catalytic activity, and might also direct the localization of the catalytic enzyme to a particular subcellular compartment. The PP2A-PPP2R5C holoenzyme may activate TP53 and play a role in DNA damage-induced inhibition of cell proliferation. PP2A-PPP2R5C may also regulate the ERK signaling pathway through ERK dephosphorylation. The protein is Serine/threonine-protein phosphatase 2A 56 kDa regulatory subunit gamma isoform (PPP2R5C) of Oryctolagus cuniculus (Rabbit).